A 375-amino-acid polypeptide reads, in one-letter code: Growth/differentiation factor 8 (375 aa).

The signal sequence occupies residues 1 to 23 (MQKLQLCVYIYLFMLIVAGPVDL). A propeptide spanning residues 24–266 (NENSEQKENV…VTDTPKRSRR (243 aa)) is cleaved from the precursor. An N-linked (GlcNAc...) asparagine glycan is attached at Asn-71. 4 disulfide bridges follow: Cys-272-Cys-282, Cys-281-Cys-340, Cys-309-Cys-372, and Cys-313-Cys-374.

The protein belongs to the TGF-beta family. Homodimer; disulfide-linked. Interacts with WFIKKN2, leading to inhibit its activity. Interacts with FSTL3. In terms of processing, synthesized as large precursor molecule that undergoes proteolytic cleavage to generate an N-terminal propeptide and a disulfide linked C-terminal dimer, which is the biologically active molecule. The circulating form consists of a latent complex of the C-terminal dimer and other proteins, including its propeptide, which maintain the C-terminal dimer in a latent, inactive state. Ligand activation requires additional cleavage of the prodomain by a tolloid-like metalloproteinase.

The protein resides in the secreted. Its function is as follows. Acts specifically as a negative regulator of skeletal muscle growth. The sequence is that of Growth/differentiation factor 8 (MSTN) from Papio hamadryas (Hamadryas baboon).